Here is a 714-residue protein sequence, read N- to C-terminus: Methyl-accepting chemotaxis protein TlpQ (714 aa).

Residues 12–32 form a helical membrane-spanning segment; it reads ITLLAGLCLLGVVALLVGLSV. Residues 50–290 enclose the Cache domain; the sequence is LDESARLRLE…LLGKNLAKAD (241 aa). Residues Glu170, 208-210, and Asp239 contribute to the histamine site; that span reads YFD. A helical transmembrane segment spans residues 360–380; the sequence is TWVELGLGLGAAVLGLLVLWL. An HAMP domain is found at 383 to 437; the sequence is RGVTRPILGVAHMLRDIASGEGDLTQRLPHTGRDELGELAGWFNRFLDKLQPIIR. A Methyl-accepting transducer domain is found at 442 to 678; sequence SVRDARSTAD…EINRNVAAIR (237 aa).

The protein belongs to the methyl-accepting chemotaxis (MCP) protein family. As to quaternary structure, homotetramer.

The protein localises to the cell membrane. Functionally, chemotactic-signal transducers respond to changes in the concentration of attractants and repellents in the environment, transduce a signal from the outside to the inside of the cell, and facilitate sensory adaptation through the variation of the level of methylation. TlpQ is a chemoreceptor that binds and mediates chemotaxis to histamine, a key biological signaling molecule. It binds histamine with high affinity, which permits responses to very low histamine concentrations. Chemotaxis to histamine may play a role in the virulence of P.aeruginosa by recruiting cells at the infection site and consequently modulating the expression of quorum-sensing-dependent virulence genes. TlpQ also binds and mediates chemotaxis to polyamines such as putrescine, spermidine, cadaverine, agmatine and ethylenediamine. In addition, binds the quorum-sensing signal autoinducer 2 (AI-2), thus inducing chemotaxis toward AI-2 and biofilm formation. The protein is Methyl-accepting chemotaxis protein TlpQ of Pseudomonas aeruginosa (strain ATCC 15692 / DSM 22644 / CIP 104116 / JCM 14847 / LMG 12228 / 1C / PRS 101 / PAO1).